Consider the following 194-residue polypeptide: MTENSAPAAKPRRSKASKKSTDHPKYSDMILDAVQAEKSRSGSSRQSIQKYIKNNYTVGENADSQIKLSIKRLVTSGTLKQTKGVGASGSFRLAKADEVKKPAKKPKKEIKKAVSPKKAAKPKKAAKSPAKAKKPKVAEKKVKKAPKKKPAPSPRKAKKTKTVRAKPVWASKAKKAKPSKPKAKASPKKSGRKK.

2 disordered regions span residues 1-29 and 96-194; these read MTENSAPAAKPRRSKASKKSTDHPKYSDM and ADEV…GRKK. The region spanning 22–95 is the H15 domain; sequence DHPKYSDMIL…GASGSFRLAK (74 aa). Composition is skewed to basic residues over residues 102–164 and 172–194; these read PAKK…KTVR and KAKKAKPSKPKAKASPKKSGRKK.

Belongs to the histone H1/H5 family.

It is found in the nucleus. Its subcellular location is the chromosome. Its function is as follows. Histones H1 are necessary for the condensation of nucleosome chains into higher-order structures. The histones H1.0 are found in cells that are in terminal stages of differentiation or that have low rates of cell division. The chain is Histone H1.0-A (h1-0-a) from Xenopus laevis (African clawed frog).